Here is a 513-residue protein sequence, read N- to C-terminus: GMP synthase [glutamine-hydrolyzing] (513 aa).

A Glutamine amidotransferase type-1 domain is found at 3-200; sequence SVLVLDFGSQ…LINIAGIRPD (198 aa). C80 (nucleophile) is an active-site residue. Residues H174 and E176 contribute to the active site. Residues 201 to 388 enclose the GMPS ATP-PPase domain; it reads WSSKSFIEHQ…LGIPEDILMR (188 aa). 228–234 contributes to the ATP binding site; that stretch reads SGGVDST.

Homodimer.

It catalyses the reaction XMP + L-glutamine + ATP + H2O = GMP + L-glutamate + AMP + diphosphate + 2 H(+). The protein operates within purine metabolism; GMP biosynthesis; GMP from XMP (L-Gln route): step 1/1. In terms of biological role, catalyzes the synthesis of GMP from XMP. This is GMP synthase [glutamine-hydrolyzing] from Chlorobium luteolum (strain DSM 273 / BCRC 81028 / 2530) (Pelodictyon luteolum).